A 163-amino-acid polypeptide reads, in one-letter code: Nucleotide-binding protein DvMF_3058 (163 aa).

It belongs to the YajQ family.

Functionally, nucleotide-binding protein. The sequence is that of Nucleotide-binding protein DvMF_3058 from Nitratidesulfovibrio vulgaris (strain DSM 19637 / Miyazaki F) (Desulfovibrio vulgaris).